Reading from the N-terminus, the 262-residue chain is Thiazole synthase (262 aa).

K97 serves as the catalytic Schiff-base intermediate with DXP. Residues G158, 185 to 186, and 207 to 208 each bind 1-deoxy-D-xylulose 5-phosphate; these read AG and NT. A disordered region spans residues 243–262; the sequence is DKAQASTPTVGQPFWHSAEY.

It belongs to the ThiG family. Homotetramer. Forms heterodimers with either ThiH or ThiS.

It localises to the cytoplasm. It carries out the reaction [ThiS sulfur-carrier protein]-C-terminal-Gly-aminoethanethioate + 2-iminoacetate + 1-deoxy-D-xylulose 5-phosphate = [ThiS sulfur-carrier protein]-C-terminal Gly-Gly + 2-[(2R,5Z)-2-carboxy-4-methylthiazol-5(2H)-ylidene]ethyl phosphate + 2 H2O + H(+). It functions in the pathway cofactor biosynthesis; thiamine diphosphate biosynthesis. Catalyzes the rearrangement of 1-deoxy-D-xylulose 5-phosphate (DXP) to produce the thiazole phosphate moiety of thiamine. Sulfur is provided by the thiocarboxylate moiety of the carrier protein ThiS. In vitro, sulfur can be provided by H(2)S. This Neisseria meningitidis serogroup B (strain ATCC BAA-335 / MC58) protein is Thiazole synthase.